Reading from the N-terminus, the 187-residue chain is MTVGISVEKGKQDTPPLELHYLGDKVLRQKAKRIAKVDDEIRTLAKEMLQTMYSSQGIGLAAPQVGVNKRLIVIDTDPENPANAPLVLINPEIKKFGQQLCPFEEGCLSIPGVHLDVIRPDEIEVSYRDEQGKPKRIKASGLLSRVIQHEIDHLDGVMFVDRVENEIALSSQLKQRGFALKSVQRIA.

Fe cation-binding residues include cysteine 107 and histidine 149. Glutamate 150 is a catalytic residue. Histidine 153 lines the Fe cation pocket.

This sequence belongs to the polypeptide deformylase family. It depends on Fe(2+) as a cofactor.

It carries out the reaction N-terminal N-formyl-L-methionyl-[peptide] + H2O = N-terminal L-methionyl-[peptide] + formate. Functionally, removes the formyl group from the N-terminal Met of newly synthesized proteins. Requires at least a dipeptide for an efficient rate of reaction. N-terminal L-methionine is a prerequisite for activity but the enzyme has broad specificity at other positions. The sequence is that of Peptide deformylase from Picosynechococcus sp. (strain ATCC 27264 / PCC 7002 / PR-6) (Agmenellum quadruplicatum).